Reading from the N-terminus, the 343-residue chain is MDFLVLFSFYLAFLLICVIMICIFTKSQRLKAVVLGGAQVCARVTPQCFQRAVQTLLHQLFHTRHPAFLALHLLLQGLVYAEYTYEVFSYCRELEFSLPCLLLPYVLLSVNLVFFTLTCSTNPGTITKTNVLLLLQVYEFDEVMFPKNSRCSTCDLRKPARSKHCRVCDRCVHRFDHHCVWVNNCIGAWNTGYFLIYLLTLTASAATIAILSAAFLLRLVAVSNLYQETYLDDLGRFQAVDTGFLIQHLFLAFPRIIFLLGFVIVLSLLLAGYLCFALYLAATNQTTNEWYRGDWAWCQHWPLVAWSPSAEPQIHQNIYSHGLWSNLQEVFIPATPSYKKKKR.

Topologically, residues Met-1 to Asp-2 are lumenal. A helical transmembrane segment spans residues Phe-3–Ile-23. Residues Phe-24 to Ala-67 lie on the Cytoplasmic side of the membrane. The helical transmembrane segment at Phe-68–Phe-88 threads the bilayer. Over Ser-89 to Glu-95 the chain is Lumenal. Residues Phe-96–Thr-116 traverse the membrane as a helical segment. Topologically, residues Leu-117–Tyr-193 are cytoplasmic. Residues Ser-149–Leu-199 enclose the DHHC domain. Residue Cys-179 is the S-palmitoyl cysteine intermediate of the active site. A helical transmembrane segment spans residues Phe-194–Ala-214. Topologically, residues Phe-215–Arg-255 are lumenal. Residues Ile-256–Phe-276 form a helical membrane-spanning segment. Residues Ala-277–Arg-343 lie on the Cytoplasmic side of the membrane. The Di-lysine motif motif lies at Lys-340 to Arg-343.

The protein belongs to the DHHC palmitoyltransferase family. In terms of assembly, interacts with CPT1A.

The protein resides in the endoplasmic reticulum membrane. It is found in the golgi apparatus membrane. Its subcellular location is the cell membrane. It carries out the reaction L-cysteinyl-[protein] + hexadecanoyl-CoA = S-hexadecanoyl-L-cysteinyl-[protein] + CoA. Functionally, palmitoyltransferase that could catalyze the addition of palmitate onto protein substrates including the D(2) dopamine receptor DRD2, GSK3B or MAVS. Mediates GSK3B palmitoylation to prevent its AKT1-mediated phosphorylation leading to activation of the STAT3 signaling pathway. Also catalyzes MAVS palmitoylation which promotes its stabilization and activation by inhibiting 'Lys-48'- but facilitating 'Lys-63'-linked ubiquitination. The chain is Palmitoyltransferase ZDHHC4 from Rattus norvegicus (Rat).